A 210-amino-acid chain; its full sequence is Large ribosomal subunit protein uL3 (210 aa).

The tract at residues 126–167 (WGFQRGPSGHGSKNIREPGSTGNATFPGRVIKGKKMPGQKGN) is disordered. Basic residues predominate over residues 156 to 167 (IKGKKMPGQKGN).

Belongs to the universal ribosomal protein uL3 family. Part of the 50S ribosomal subunit. Forms a cluster with proteins L14 and L19.

One of the primary rRNA binding proteins, it binds directly near the 3'-end of the 23S rRNA, where it nucleates assembly of the 50S subunit. This chain is Large ribosomal subunit protein uL3, found in Syntrophobacter fumaroxidans (strain DSM 10017 / MPOB).